A 260-amino-acid polypeptide reads, in one-letter code: UPF0246 protein BURPS668_1321 (260 aa).

This sequence belongs to the UPF0246 family.

The sequence is that of UPF0246 protein BURPS668_1321 from Burkholderia pseudomallei (strain 668).